Reading from the N-terminus, the 373-residue chain is Alpha-1,3-mannosyl-glycoprotein 4-beta-N-acetylglucosaminyltransferase-like protein MGAT4D (373 aa).

Residues 1–5 (MKAKN) are Cytoplasmic-facing. Residues 6–26 (VNLLFAFVAVLLFGFSCFCIS) traverse the membrane as a helical; Signal-anchor for type II membrane protein segment. Residues 27-373 (RMNQTNNQLI…REQHLKDNYY (347 aa)) are Lumenal-facing. N-linked (GlcNAc...) asparagine glycosylation is found at asparagine 29, asparagine 54, and asparagine 144.

It belongs to the glycosyltransferase 54 family. Isoform 2 self-associates; specifically in the endoplasmic reticulum prior to its translocation to the Golgi. Isoform 1 and isoform 2 interact with MGAT1, MGAT3 and MAN2A2; isoform 2 interacts specifically with MGAT1 in the Golgi. Post-translationally, isoform 2 is N-glycosylated; consisting of high-mannose and/or hybrid glycans. Isoform 1 and isoform 2 are specifically expressed in testis. Isoform 2 is expressed in spermatocytes but not in spermatids. Isoform 1 is expressed in spermatids.

Its subcellular location is the endoplasmic reticulum membrane. It localises to the endoplasmic reticulum-Golgi intermediate compartment membrane. The protein resides in the golgi apparatus membrane. May play a role in male spermatogenesis. In vitro acts as inhibitor of MGAT1 activity causing cell surface proteins to carry mainly high mannose N-glycans. The function is mediated by its lumenal domain and occurs specifically in the Golgi. A catalytic glucosyltransferase activity is not detected. May be involved in regulation of Sertoli-germ cell interactions during specific stages of spermatogenesis. The polypeptide is Alpha-1,3-mannosyl-glycoprotein 4-beta-N-acetylglucosaminyltransferase-like protein MGAT4D (Mus musculus (Mouse)).